The primary structure comprises 66 residues: Large ribosomal subunit protein bL35c (66 aa).

This sequence belongs to the bacterial ribosomal protein bL35 family.

The protein resides in the plastid. The protein localises to the chloroplast. This Gracilaria tenuistipitata var. liui (Red alga) protein is Large ribosomal subunit protein bL35c.